A 106-amino-acid chain; its full sequence is MRGRLRIERVVTDVGDRLVNVAICTHGHNDHVTVAPELAERLHALVPLHPGATTGRSYSDFPTTIGSIRDRLFALPEETLVHTGHGDGTTIGTEAPHLAEWIARGQ.

This is an uncharacterized protein from Rhodococcus erythropolis (Arthrobacter picolinophilus).